Reading from the N-terminus, the 1141-residue chain is LRR receptor-like serine/threonine-protein kinase RGI1 (1141 aa).

Positions 1 to 33 (MSLHSLIFFSSSSSSLLFSFFFIFIFCFSLSDA) are cleaved as a signal peptide. Topologically, residues 34 to 726 (EQNPEASILY…DASRTRKLRL (693 aa)) are extracellular. A disulfide bridge connects residues cysteine 69 and cysteine 77. Residue asparagine 71 is glycosylated (N-linked (GlcNAc...) asparagine). 25 LRR repeats span residues 80–104 (QGFITDIDIESVPLQLSLPKNLPAF), 105–128 (RSLQKLTISGANLTGTLPESLGDC), 130–152 (GLKVLDLSSNGLVGDIPWSLSKL), 153–176 (RNLETLILNSNQLTGKIPPDISKC), 178–200 (KLKSLILFDNLLTGSIPTELGKL), 202–225 (GLEVIRIGGNKEISGQIPSEIGDC), 226–249 (SNLTVLGLAETSVSGNLPSSLGKL), 250–273 (KKLETLSIYTTMISGEIPSDLGNC), 275–297 (ELVDLFLYENSLSGSIPREIGQL), 298–321 (TKLEQLFLWQNSLVGGIPEEIGNC), 322–345 (SNLKMIDLSLNLLSGSIPSSIGRL), 347–369 (FLEEFMISDNKFSGSIPTTISNC), 370–392 (SSLVQLQLDKNQISGLIPSELGT), 394–417 (TKLTLFFAWSNQLEGSIPPGLADC), 418–441 (TDLQALDLSRNSLTGTIPSGLFML), 443–464 (NLTKLLLISNSLSGFIPQEIGN), 465–489 (CSSLVRLRLGFNRITGEIPSGIGSL), 490–513 (KKINFLDFSSNRLHGKVPDEIGSC), 514–537 (SELQMIDLSNNSLEGSLPNPVSSL), 538–561 (SGLQVLDVSANQFSGKIPASLGRL), 563–585 (SLNKLILSKNLFSGSIPTSLGMC), 586–609 (SGLQLLDLGSNELSGEIPSELGDI), 610–634 (ENLEIALNLSSNRLTGKIPSKIASL), 636–657 (KLSILDLSHNMLEGDLAPLANI), and 658–682 (ENLVSLNISYNSFSGYLPDNKLFRQ). Asparagine 116 carries an N-linked (GlcNAc...) asparagine glycan. 2 short sequence motifs (small peptide recognition) span residues 185-186 (FD) and 207-210 (RIGG). N-linked (GlcNAc...) asparagine glycosylation occurs at asparagine 227. 2 consecutive short sequence motifs (small peptide recognition) follow at residues 230–235 (VLGLAE) and tyrosine 258. N-linked (GlcNAc...) asparagine glycosylation occurs at asparagine 272. The Small peptide recognition signature appears at 280 to 282 (FLY). Residue asparagine 320 is glycosylated (N-linked (GlcNAc...) asparagine). 2 consecutive short sequence motifs (small peptide recognition) follow at residues 328 to 331 (DLSL) and 350 to 352 (EFM). Asparagine 368 is a glycosylation site (N-linked (GlcNAc...) asparagine). Short sequence motifs (small peptide recognition) lie at residues 398 to 402 (LFFAW) and 424 to 427 (DLSR). A glycan (N-linked (GlcNAc...) asparagine) is linked at asparagine 443. The short motif at 446-450 (KLLLI) is the Small peptide recognition element. N-linked (GlcNAc...) asparagine glycosylation is present at asparagine 464. Residues 470-472 (RLR) carry the Small peptide recognition motif. A glycan (N-linked (GlcNAc...) asparagine) is linked at asparagine 523. The N-linked (GlcNAc...) asparagine glycan is linked to asparagine 617. Asparagine 664 is a glycosylation site (N-linked (GlcNAc...) asparagine). A helical membrane pass occupies residues 727 to 747 (TLALLITLTVVLMILGAVAVI). The Cytoplasmic segment spans residues 748 to 1141 (RARRNIDNER…LLYSSSSSIE (394 aa)). A Protein kinase domain is found at 786 to 1074 (LVEPNVIGKG…EIKQEREEYA (289 aa)). Residues 792–800 (IGKGCSGVV) and lysine 814 contribute to the ATP site. Phosphotyrosine is present on residues tyrosine 868 and tyrosine 906. The Proton acceptor role is filled by aspartate 919. 2 positions are modified to phosphotyrosine: tyrosine 962 and tyrosine 969.

Belongs to the protein kinase superfamily. Ser/Thr protein kinase family. In terms of assembly, interacts with beet curly top virus AL4/C4. Binds to RGF peptides such as RGF1, GLV5/CLEL1/RGF2, GLV7/CLEL3/RGF3, GLV3/RGF4, GLV10/CLEL7/RGF5 and RGF10/CLELN; these interactions trigger the formation of heterodimers with SERK1, SERK2 or BAK1/SERK3 via LRR regions. Interacts with UBP13. Post-translationally, phosphorylated and ubiquitinated upon interaction with RGF1, thus leading to activation a subsequent degradation. Stabilized by UBP12 and UBP13-mediated deubiquitination. Autophosphorylated. As to expression, expressed in roots.

The protein resides in the cell membrane. It carries out the reaction L-seryl-[protein] + ATP = O-phospho-L-seryl-[protein] + ADP + H(+). It catalyses the reaction L-threonyl-[protein] + ATP = O-phospho-L-threonyl-[protein] + ADP + H(+). In terms of biological role, together with RGI2, RGI3, RGI4 and RGI5, acts as a receptor of RGF peptides (e.g. RGF1, GLV5/CLEL1/RGF2, GLV7/CLEL3/RGF3, GLV3/RGF4, GLV10/CLEL7/RGF5 and RGF10/CLELN), peptide hormones which maintain the postembryonic root stem cell niche by regulating the expression levels and patterns of the transcription factor PLETHORA (PLT, e.g. PLT1 and PLT2). Links RGF peptides signal with their downstream components. The polypeptide is LRR receptor-like serine/threonine-protein kinase RGI1 (Arabidopsis thaliana (Mouse-ear cress)).